Here is a 198-residue protein sequence, read N- to C-terminus: Glycerol-3-phosphate acyltransferase (198 aa).

The next 5 membrane-spanning stretches (helical) occupy residues 2–22 (YAVL…AYIL), 48–70 (LGYK…AVLI), 75–97 (MGNT…PVFL), 111–131 (VVMT…VTVI), and 154–174 (IFWN…LAIF).

Belongs to the PlsY family. As to quaternary structure, probably interacts with PlsX.

Its subcellular location is the cell membrane. The enzyme catalyses an acyl phosphate + sn-glycerol 3-phosphate = a 1-acyl-sn-glycero-3-phosphate + phosphate. It participates in lipid metabolism; phospholipid metabolism. Functionally, catalyzes the transfer of an acyl group from acyl-phosphate (acyl-PO(4)) to glycerol-3-phosphate (G3P) to form lysophosphatidic acid (LPA). This enzyme utilizes acyl-phosphate as fatty acyl donor, but not acyl-CoA or acyl-ACP. The sequence is that of Glycerol-3-phosphate acyltransferase from Thermoanaerobacter pseudethanolicus (strain ATCC 33223 / 39E) (Clostridium thermohydrosulfuricum).